The primary structure comprises 187 residues: Peptide methionine sulfoxide reductase A2-1 (187 aa).

This sequence belongs to the MsrA Met sulfoxide reductase family.

The protein localises to the cytoplasm. Its subcellular location is the cytosol. It catalyses the reaction L-methionyl-[protein] + [thioredoxin]-disulfide + H2O = L-methionyl-(S)-S-oxide-[protein] + [thioredoxin]-dithiol. It carries out the reaction [thioredoxin]-disulfide + L-methionine + H2O = L-methionine (S)-S-oxide + [thioredoxin]-dithiol. Functionally, catalyzes the reduction of methionine sulfoxide (MetSO) to methionine in proteins. Plays a protective role against oxidative stress by restoring activity to proteins that have been inactivated by methionine oxidation. MSRA family specifically reduces the MetSO S-enantiomer. The polypeptide is Peptide methionine sulfoxide reductase A2-1 (MSRA2-1) (Oryza sativa subsp. japonica (Rice)).